The primary structure comprises 745 residues: UPF0508 protein YJR030C (745 aa).

This sequence belongs to the UPF0508 family.

In Saccharomyces cerevisiae (strain ATCC 204508 / S288c) (Baker's yeast), this protein is UPF0508 protein YJR030C.